Reading from the N-terminus, the 120-residue chain is Ribosome-binding factor A (120 aa).

This sequence belongs to the RbfA family. In terms of assembly, monomer. Binds 30S ribosomal subunits, but not 50S ribosomal subunits or 70S ribosomes.

Its subcellular location is the cytoplasm. Functionally, one of several proteins that assist in the late maturation steps of the functional core of the 30S ribosomal subunit. Associates with free 30S ribosomal subunits (but not with 30S subunits that are part of 70S ribosomes or polysomes). Required for efficient processing of 16S rRNA. May interact with the 5'-terminal helix region of 16S rRNA. The protein is Ribosome-binding factor A of Rickettsia rickettsii (strain Iowa).